The sequence spans 152 residues: Aspartate carbamoyltransferase regulatory chain (152 aa).

Cysteine 108, cysteine 113, cysteine 136, and cysteine 139 together coordinate Zn(2+).

The protein belongs to the PyrI family. In terms of assembly, contains catalytic and regulatory chains. Requires Zn(2+) as cofactor.

Involved in allosteric regulation of aspartate carbamoyltransferase. The protein is Aspartate carbamoyltransferase regulatory chain of Thermococcus kodakarensis (strain ATCC BAA-918 / JCM 12380 / KOD1) (Pyrococcus kodakaraensis (strain KOD1)).